A 458-amino-acid chain; its full sequence is NADH-quinone oxidoreductase subunit N (458 aa).

The next 14 membrane-spanning stretches (helical) occupy residues 2 to 22, 30 to 50, 62 to 82, 93 to 113, 118 to 138, 153 to 173, 196 to 216, 235 to 255, 261 to 281, 290 to 310, 319 to 339, 361 to 381, 397 to 417, and 438 to 458; these read LLIL…CFAL, IIYN…FKYS, GINI…SLII, AIKF…FVAI, FLLL…LAGF, FILG…IYGF, LIIG…SSPL, FTSA…KLII, INYN…AFGA, LMAY…ILPN, LYIL…IMLF, IAAL…LTGF, FTLA…YLKV, and LLLI…IILF.

Belongs to the complex I subunit 2 family. As to quaternary structure, NDH-1 is composed of 14 different subunits. Subunits NuoA, H, J, K, L, M, N constitute the membrane sector of the complex.

The protein localises to the cell inner membrane. The catalysed reaction is a quinone + NADH + 5 H(+)(in) = a quinol + NAD(+) + 4 H(+)(out). In terms of biological role, NDH-1 shuttles electrons from NADH, via FMN and iron-sulfur (Fe-S) centers, to quinones in the respiratory chain. The immediate electron acceptor for the enzyme in this species is believed to be ubiquinone. Couples the redox reaction to proton translocation (for every two electrons transferred, four hydrogen ions are translocated across the cytoplasmic membrane), and thus conserves the redox energy in a proton gradient. This Rickettsia typhi (strain ATCC VR-144 / Wilmington) protein is NADH-quinone oxidoreductase subunit N.